The primary structure comprises 884 residues: Alanine--tRNA ligase (884 aa).

The Zn(2+) site is built by H565, H569, C672, and H676.

This sequence belongs to the class-II aminoacyl-tRNA synthetase family. Zn(2+) serves as cofactor.

Its subcellular location is the cytoplasm. It carries out the reaction tRNA(Ala) + L-alanine + ATP = L-alanyl-tRNA(Ala) + AMP + diphosphate. Its function is as follows. Catalyzes the attachment of alanine to tRNA(Ala) in a two-step reaction: alanine is first activated by ATP to form Ala-AMP and then transferred to the acceptor end of tRNA(Ala). Also edits incorrectly charged Ser-tRNA(Ala) and Gly-tRNA(Ala) via its editing domain. The polypeptide is Alanine--tRNA ligase (Sphingopyxis alaskensis (strain DSM 13593 / LMG 18877 / RB2256) (Sphingomonas alaskensis)).